The sequence spans 317 residues: Putative 2-hydroxyacid dehydrogenase SE_1879 (317 aa).

Residues 155–156, 234–236, and Asp260 contribute to the NAD(+) site; these read EI and AGR. Arg236 is an active-site residue. The active site involves Glu265. The active-site Proton donor is the His283. Residue 283-286 participates in NAD(+) binding; that stretch reads HIGN.

The protein belongs to the D-isomer specific 2-hydroxyacid dehydrogenase family.

This Staphylococcus epidermidis (strain ATCC 12228 / FDA PCI 1200) protein is Putative 2-hydroxyacid dehydrogenase SE_1879.